A 424-amino-acid polypeptide reads, in one-letter code: Serine--tRNA ligase 1 (424 aa).

Threonine 232 to glutamate 234 contributes to the L-serine binding site. Arginine 263–glutamate 265 serves as a coordination point for ATP. L-serine is bound at residue glutamate 286. Glutamate 350–serine 353 lines the ATP pocket. Residue serine 386 coordinates L-serine.

Belongs to the class-II aminoacyl-tRNA synthetase family. Type-1 seryl-tRNA synthetase subfamily. In terms of assembly, homodimer. The tRNA molecule binds across the dimer.

It localises to the cytoplasm. The catalysed reaction is tRNA(Ser) + L-serine + ATP = L-seryl-tRNA(Ser) + AMP + diphosphate + H(+). It catalyses the reaction tRNA(Sec) + L-serine + ATP = L-seryl-tRNA(Sec) + AMP + diphosphate + H(+). Its pathway is aminoacyl-tRNA biosynthesis; selenocysteinyl-tRNA(Sec) biosynthesis; L-seryl-tRNA(Sec) from L-serine and tRNA(Sec): step 1/1. Catalyzes the attachment of serine to tRNA(Ser). Is also able to aminoacylate tRNA(Sec) with serine, to form the misacylated tRNA L-seryl-tRNA(Sec), which will be further converted into selenocysteinyl-tRNA(Sec). The sequence is that of Serine--tRNA ligase 1 from Clostridium acetobutylicum (strain ATCC 824 / DSM 792 / JCM 1419 / IAM 19013 / LMG 5710 / NBRC 13948 / NRRL B-527 / VKM B-1787 / 2291 / W).